The following is a 324-amino-acid chain: tRNA uridine(34) hydroxylase (324 aa).

The region spanning 122 to 218 is the Rhodanese domain; sequence QENRCLILDV…YGQQVGTGKW (97 aa). Cys178 acts as the Cysteine persulfide intermediate in catalysis.

Belongs to the TrhO family.

It carries out the reaction uridine(34) in tRNA + AH2 + O2 = 5-hydroxyuridine(34) in tRNA + A + H2O. Its function is as follows. Catalyzes oxygen-dependent 5-hydroxyuridine (ho5U) modification at position 34 in tRNAs. The polypeptide is tRNA uridine(34) hydroxylase (Chlamydia pneumoniae (Chlamydophila pneumoniae)).